The chain runs to 438 residues: V-type ATP synthase beta chain (438 aa).

It belongs to the ATPase alpha/beta chains family.

Its function is as follows. Produces ATP from ADP in the presence of a proton gradient across the membrane. The V-type beta chain is a regulatory subunit. In Chlamydia abortus (strain DSM 27085 / S26/3) (Chlamydophila abortus), this protein is V-type ATP synthase beta chain.